Reading from the N-terminus, the 297-residue chain is Ubiquinol oxidase 2, mitochondrial (297 aa).

The tract at residues V17–D43 is disordered. A helical transmembrane segment spans residues A122–C142. E126, E165, and H168 together coordinate Fe cation. The helical transmembrane segment at A184–S204 threads the bilayer. Positions 216, 267, and 270 each coordinate Fe cation.

This sequence belongs to the alternative oxidase family. As to quaternary structure, homodimer; disulfide-linked. Requires Fe cation as cofactor.

It is found in the mitochondrion inner membrane. The catalysed reaction is 2 a ubiquinol + O2 = 2 a ubiquinone + 2 H2O. In terms of biological role, catalyzes the cyanide-resistant oxidation of ubiquinol and the reduction of molecular oxygen to water, but does not translocate protons and consequently is not linked to oxidative phosphorylation. May increase respiration when the cytochrome respiratory pathway is restricted, or in response to low temperatures. This chain is Ubiquinol oxidase 2, mitochondrial (AOX2), found in Nicotiana tabacum (Common tobacco).